Consider the following 232-residue polypeptide: Phosphatidylserine decarboxylase proenzyme (232 aa).

The active-site Schiff-base intermediate with substrate; via pyruvic acid is the Ser-201. Position 201 is a pyruvic acid (Ser); by autocatalysis (Ser-201).

It belongs to the phosphatidylserine decarboxylase family. PSD-A subfamily. In terms of assembly, heterodimer of a large membrane-associated beta subunit and a small pyruvoyl-containing alpha subunit. It depends on pyruvate as a cofactor. Is synthesized initially as an inactive proenzyme. Formation of the active enzyme involves a self-maturation process in which the active site pyruvoyl group is generated from an internal serine residue via an autocatalytic post-translational modification. Two non-identical subunits are generated from the proenzyme in this reaction, and the pyruvate is formed at the N-terminus of the alpha chain, which is derived from the carboxyl end of the proenzyme. The post-translation cleavage follows an unusual pathway, termed non-hydrolytic serinolysis, in which the side chain hydroxyl group of the serine supplies its oxygen atom to form the C-terminus of the beta chain, while the remainder of the serine residue undergoes an oxidative deamination to produce ammonia and the pyruvoyl prosthetic group on the alpha chain.

It is found in the cell membrane. It carries out the reaction a 1,2-diacyl-sn-glycero-3-phospho-L-serine + H(+) = a 1,2-diacyl-sn-glycero-3-phosphoethanolamine + CO2. Its pathway is phospholipid metabolism; phosphatidylethanolamine biosynthesis; phosphatidylethanolamine from CDP-diacylglycerol: step 2/2. Functionally, catalyzes the formation of phosphatidylethanolamine (PtdEtn) from phosphatidylserine (PtdSer). The chain is Phosphatidylserine decarboxylase proenzyme from Mycolicibacterium smegmatis (strain ATCC 700084 / mc(2)155) (Mycobacterium smegmatis).